The primary structure comprises 130 residues: 3-hydroxyisobutyrate dehydrogenase, mitochondrial (130 aa).

Residues Thr1 to Lys17, Leu25 to Pro26, and Asn30 each bind NAD(+). N6-acetyllysine is present on Lys43. Lys47 is subject to N6-acetyllysine; alternate. An N6-succinyllysine; alternate modification is found at Lys47. Lys101 carries the post-translational modification N6-succinyllysine.

The protein belongs to the HIBADH-related family. 3-hydroxyisobutyrate dehydrogenase subfamily. In terms of assembly, homodimer.

Its subcellular location is the mitochondrion. The enzyme catalyses 3-hydroxy-2-methylpropanoate + NAD(+) = 2-methyl-3-oxopropanoate + NADH + H(+). Its pathway is amino-acid degradation; L-valine degradation. The polypeptide is 3-hydroxyisobutyrate dehydrogenase, mitochondrial (Mesocricetus auratus (Golden hamster)).